The sequence spans 294 residues: Phosphatidylserine decarboxylase proenzyme (294 aa).

Catalysis depends on charge relay system; for autoendoproteolytic cleavage activity residues aspartate 100, histidine 157, and serine 261. The active-site Schiff-base intermediate with substrate; via pyruvic acid; for decarboxylase activity is the serine 261. At serine 261 the chain carries Pyruvic acid (Ser); by autocatalysis.

Belongs to the phosphatidylserine decarboxylase family. PSD-B subfamily. Prokaryotic type I sub-subfamily. As to quaternary structure, heterodimer of a large membrane-associated beta subunit and a small pyruvoyl-containing alpha subunit. It depends on pyruvate as a cofactor. Is synthesized initially as an inactive proenzyme. Formation of the active enzyme involves a self-maturation process in which the active site pyruvoyl group is generated from an internal serine residue via an autocatalytic post-translational modification. Two non-identical subunits are generated from the proenzyme in this reaction, and the pyruvate is formed at the N-terminus of the alpha chain, which is derived from the carboxyl end of the proenzyme. The autoendoproteolytic cleavage occurs by a canonical serine protease mechanism, in which the side chain hydroxyl group of the serine supplies its oxygen atom to form the C-terminus of the beta chain, while the remainder of the serine residue undergoes an oxidative deamination to produce ammonia and the pyruvoyl prosthetic group on the alpha chain. During this reaction, the Ser that is part of the protease active site of the proenzyme becomes the pyruvoyl prosthetic group, which constitutes an essential element of the active site of the mature decarboxylase.

Its subcellular location is the cell membrane. It catalyses the reaction a 1,2-diacyl-sn-glycero-3-phospho-L-serine + H(+) = a 1,2-diacyl-sn-glycero-3-phosphoethanolamine + CO2. Its pathway is phospholipid metabolism; phosphatidylethanolamine biosynthesis; phosphatidylethanolamine from CDP-diacylglycerol: step 2/2. Functionally, catalyzes the formation of phosphatidylethanolamine (PtdEtn) from phosphatidylserine (PtdSer). In Histophilus somni (strain 2336) (Haemophilus somnus), this protein is Phosphatidylserine decarboxylase proenzyme.